The primary structure comprises 135 residues: Large ribosomal subunit protein mL61 (135 aa).

Over residues 114-129 (HHESSPENIKEAHKQD) the composition is skewed to basic and acidic residues. The segment at 114–135 (HHESSPENIKEAHKQDYSPPSN) is disordered.

This sequence belongs to the mitochondrion-specific ribosomal protein mL61 family. In terms of assembly, component of the mitochondrial large ribosomal subunit (mt-LSU). Mature yeast 74S mitochondrial ribosomes consist of a small (37S) and a large (54S) subunit. The 37S small subunit contains a 15S ribosomal RNA (15S mt-rRNA) and at least 32 different proteins. The 54S large subunit contains a 21S rRNA (21S mt-rRNA) and at least 45 different proteins.

The protein resides in the mitochondrion. Functionally, component of the mitochondrial ribosome (mitoribosome), a dedicated translation machinery responsible for the synthesis of mitochondrial genome-encoded proteins, including at least some of the essential transmembrane subunits of the mitochondrial respiratory chain. The mitoribosomes are attached to the mitochondrial inner membrane and translation products are cotranslationally integrated into the membrane. mL61 is not essential in cells grown at 30 degrees Celsius but is required for mitochondrial translation in cells grown at 18 degrees Celsius. This is Large ribosomal subunit protein mL61 (mrp49) from Schizosaccharomyces pombe (strain 972 / ATCC 24843) (Fission yeast).